The sequence spans 328 residues: MKFGIEFVPSDPALKIAYYAKLSEQQGFDYVWITDHYNNRDVYSTLTVLALNTNSIKIGSGVTNSYTRNPAITASSIASIAEISGGRAVLGLGPGDKATFDAMGIAWEKPLATTKEAIQAIRDFIAGKKVSMDGEMVKFAGAKLAFKAGNVPIYMGAQGPKMLELAGEVADGVLINASHPKDFEVAVEQIRKGAEKVGRDPSEVDVTAYACFSIDKDPAKAINAAKVVVAFIVAGSPDLVLERHGIPVDAKKQIGDAIAKGDFGALMGGLVTPQMIEAFAICGTPEDCMKRIKDLEAIGVTQIVAGSPIGPEKEKAIKLIGKEIIAKM.

Belongs to the mer family.

Its subcellular location is the cytoplasm. The catalysed reaction is 5-methyl-5,6,7,8-tetrahydromethanopterin + oxidized coenzyme F420-(gamma-L-Glu)(n) + H(+) = 5,10-methylenetetrahydromethanopterin + reduced coenzyme F420-(gamma-L-Glu)(n). Its pathway is one-carbon metabolism; methanogenesis from CO(2); methyl-coenzyme M from 5,10-methylene-5,6,7,8-tetrahydromethanopterin: step 1/2. Catalyzes the reversible reduction of methylene-H(4)MPT to methyl-H(4)MPT. This is 5,10-methylenetetrahydromethanopterin reductase from Methanosarcina acetivorans (strain ATCC 35395 / DSM 2834 / JCM 12185 / C2A).